The following is a 302-amino-acid chain: tRNA pseudouridine synthase B (302 aa).

Asp45 functions as the Nucleophile in the catalytic mechanism.

This sequence belongs to the pseudouridine synthase TruB family. Type 1 subfamily.

It catalyses the reaction uridine(55) in tRNA = pseudouridine(55) in tRNA. Responsible for synthesis of pseudouridine from uracil-55 in the psi GC loop of transfer RNAs. The sequence is that of tRNA pseudouridine synthase B from Francisella tularensis subsp. novicida (strain U112).